The sequence spans 235 residues: Orotidine 5'-phosphate decarboxylase (235 aa).

Residues Asp-12, Lys-34, 61–70 (DMKLLDIDNT), Thr-116, Arg-177, Gln-186, Gly-206, and Arg-207 contribute to the substrate site. Lys-63 acts as the Proton donor in catalysis.

It belongs to the OMP decarboxylase family. Type 1 subfamily. In terms of assembly, homodimer.

It catalyses the reaction orotidine 5'-phosphate + H(+) = UMP + CO2. Its pathway is pyrimidine metabolism; UMP biosynthesis via de novo pathway; UMP from orotate: step 2/2. In terms of biological role, catalyzes the decarboxylation of orotidine 5'-monophosphate (OMP) to uridine 5'-monophosphate (UMP). The polypeptide is Orotidine 5'-phosphate decarboxylase (Rhizobium etli (strain ATCC 51251 / DSM 11541 / JCM 21823 / NBRC 15573 / CFN 42)).